The sequence spans 250 residues: Ubiquinone/menaquinone biosynthesis C-methyltransferase UbiE (250 aa).

Residues Thr-73, Asp-94, and 122–123 (DA) each bind S-adenosyl-L-methionine.

This sequence belongs to the class I-like SAM-binding methyltransferase superfamily. MenG/UbiE family.

The enzyme catalyses a 2-demethylmenaquinol + S-adenosyl-L-methionine = a menaquinol + S-adenosyl-L-homocysteine + H(+). The catalysed reaction is a 2-methoxy-6-(all-trans-polyprenyl)benzene-1,4-diol + S-adenosyl-L-methionine = a 5-methoxy-2-methyl-3-(all-trans-polyprenyl)benzene-1,4-diol + S-adenosyl-L-homocysteine + H(+). The protein operates within quinol/quinone metabolism; menaquinone biosynthesis; menaquinol from 1,4-dihydroxy-2-naphthoate: step 2/2. Its pathway is cofactor biosynthesis; ubiquinone biosynthesis. In terms of biological role, methyltransferase required for the conversion of demethylmenaquinol (DMKH2) to menaquinol (MKH2) and the conversion of 2-polyprenyl-6-methoxy-1,4-benzoquinol (DDMQH2) to 2-polyprenyl-3-methyl-6-methoxy-1,4-benzoquinol (DMQH2). The protein is Ubiquinone/menaquinone biosynthesis C-methyltransferase UbiE of Coxiella burnetii (strain RSA 493 / Nine Mile phase I).